The following is a 234-amino-acid chain: Prolactin-6A1 (234 aa).

The first 33 residues, Met1–Ser33, serve as a signal peptide directing secretion. N-linked (GlcNAc...) asparagine glycosylation occurs at Asn61. 2 disulfides stabilise this stretch: Cys93-Cys209 and Cys226-Cys234.

This sequence belongs to the somatotropin/prolactin family.

The protein resides in the secreted. In Rattus norvegicus (Rat), this protein is Prolactin-6A1 (Prl6a1).